A 495-amino-acid chain; its full sequence is Heterogeneous nuclear ribonucleoprotein Q (495 aa).

A compositionally biased stretch (basic and acidic residues) spans 1-10; sequence MSDARDNDDR. A disordered region spans residues 1–101; that stretch reads MSDARDNDDR…KPPSPIDDED (101 aa). 2 stretches are compositionally biased toward acidic residues: residues 11-46 and 67-101; these read VDFEEGSYSEMEDEVEEEQVEEYEEEEEEDDDDDDV and MEDVQEEIAEDDDNHIDIETADDDEKPPSPIDDED. 3 RRM domains span residues 116 to 194, 196 to 278, and 292 to 368; these read SEVF…LSET, NRLF…WADP, and KALY…LAKP. Residues 452-495 form a disordered region; it reads MPMAAAPPQRPRRNDRNNGSSGGSGRDNSHEHDGNRGGRRYRPY. The span at 478 to 487 shows a compositional bias: basic and acidic residues; the sequence is DNSHEHDGNR.

As to quaternary structure, interacts with LHP1 in the nucleus on a common set of chromatin regions. Predominantly expressed in vascular and meristematic tissues. Expressed throughout development in seedlings, roots, leaves, floral buds and siliques.

It localises to the nucleus. The protein resides in the cytoplasm. The protein localises to the microsome. Functionally, transcriptional activator that binds DNA on GAGA-like motif and 5'-(C/G)ACGTG(G/T)C(A/G)-3' consensus motif in the promoters of target genes. Component of ribonucleosomes, which are complexes of at least 20 other different heterogeneous nuclear ribonucleoproteins (hnRNP). hnRNP play an important role in processing of precursor mRNA in the nucleus. Required during flower development and for cell fate determination. Acts both as an antagonist and as a promoter of polycomb LHP1 gene regulation activity, depending of target genes, to regulate the transcription of stress-responsive and flowering genes. May regulate histone H3 trimethylation on lysine 27 (H3K27me3). Recognizes and binds histone H3 tails methylated at 'Lys-4' (H3K4me) and acetylated at 'Lys-9' (H3K9ac), leading to epigenetic activation. When in complex with LHP1, recognizes and binds histone H3 tails methylated at 'Lys-4' (H3K4me) and 'Lys-27' (H3K27me), mostly corresponding to stress-responsive genes. May function as a suppressor of cell-autonomous immune responses involving glucosinolates, salicylic acid (SA) and jasmonic acid (JA) pathways toward pathogenic bacteria and fungi. In Arabidopsis thaliana (Mouse-ear cress), this protein is Heterogeneous nuclear ribonucleoprotein Q.